A 411-amino-acid chain; its full sequence is Citrate synthase (411 aa).

Active-site residues include H304 and D363.

Belongs to the citrate synthase family.

It catalyses the reaction oxaloacetate + acetyl-CoA + H2O = citrate + CoA + H(+). It functions in the pathway carbohydrate metabolism; tricarboxylic acid cycle; isocitrate from oxaloacetate: step 1/2. In Rickettsia massiliae, this protein is Citrate synthase (gltA).